The sequence spans 626 residues: Serine/threonine-protein kinase PknH (626 aa).

Residues 1-403 lie on the Cytoplasmic side of the membrane; that stretch reads MSDAQDSRVG…QTPRKTNPWP (403 aa). Positions 16–276 constitute a Protein kinase domain; the sequence is YHLKRLLGRG…DLALAAHEAL (261 aa). Residues 22-30 and K45 each bind ATP; that span reads LGRGGMGEV. D139 serves as the catalytic Proton acceptor. T170 carries the phosphothreonine modification. The disordered stretch occupies residues 292-396; the sequence is QESTLPAPPK…GGPSPWAQTP (105 aa). Composition is skewed to pro residues over residues 297 to 308 and 316 to 342; these read PAPPKPVPPPTM and RQPPAPPVTPPGVQPAPKPSYTPPAQP. Low complexity predominate over residues 343–355; that stretch reads GPAGQRPGPTGQP. The helical transmembrane segment at 404–424 threads the bilayer; it reads LVAGAAAVVLVLVLGAIGIWI. At 425 to 626 the chain is on the extracellular side; sequence AIRPKPVQPP…AKIVDKVNKE (202 aa). Intrachain disulfides connect C482–C545 and C587–C604.

It belongs to the protein kinase superfamily. Ser/Thr protein kinase family. The cofactor is a divalent metal cation. In terms of processing, autophosphorylated on threonine and serine residues. Dephosphorylated by PstP.

It localises to the cell membrane. It catalyses the reaction L-seryl-[protein] + ATP = O-phospho-L-seryl-[protein] + ADP + H(+). It carries out the reaction L-threonyl-[protein] + ATP = O-phospho-L-threonyl-[protein] + ADP + H(+). Its function is as follows. May regulate bacterial growth in response to external signals to facilitate adaptation to the host environment. The chain is Serine/threonine-protein kinase PknH (pknH) from Mycobacterium tuberculosis (strain CDC 1551 / Oshkosh).